Reading from the N-terminus, the 981-residue chain is Isoleucine--tRNA ligase (981 aa).

The 'HIGH' region motif lies at 50 to 60 (PTTNGMPHVGH). The 'KMSKS' region signature appears at 604–608 (KMSKS). K607 lines the ATP pocket.

Belongs to the class-I aminoacyl-tRNA synthetase family. IleS type 2 subfamily. As to quaternary structure, monomer. Zn(2+) is required as a cofactor.

Its subcellular location is the cytoplasm. It catalyses the reaction tRNA(Ile) + L-isoleucine + ATP = L-isoleucyl-tRNA(Ile) + AMP + diphosphate. Its function is as follows. Catalyzes the attachment of isoleucine to tRNA(Ile). As IleRS can inadvertently accommodate and process structurally similar amino acids such as valine, to avoid such errors it has two additional distinct tRNA(Ile)-dependent editing activities. One activity is designated as 'pretransfer' editing and involves the hydrolysis of activated Val-AMP. The other activity is designated 'posttransfer' editing and involves deacylation of mischarged Val-tRNA(Ile). In Pyrobaculum aerophilum (strain ATCC 51768 / DSM 7523 / JCM 9630 / CIP 104966 / NBRC 100827 / IM2), this protein is Isoleucine--tRNA ligase.